Consider the following 369-residue polypeptide: GTPase Obg (369 aa).

One can recognise an Obg domain in the interval 1–159; sequence MKFIDEAKIE…RELRLELKVL (159 aa). Residues 128 to 148 form a disordered region; that stretch reads IHFKSSTNRAPRQKSEGKEGE. The 174-residue stretch at 160–333 folds into the OBG-type G domain; the sequence is ADIGLLGMPN…LVTEIYDYIA (174 aa). GTP is bound by residues 166-173, 191-195, 213-216, 283-286, and 314-316; these read GMPNAGKS, FTTLH, DIPG, NKLD, and SAL. The Mg(2+) site is built by Ser-173 and Thr-193.

It belongs to the TRAFAC class OBG-HflX-like GTPase superfamily. OBG GTPase family. Monomer. The cofactor is Mg(2+).

The protein localises to the cytoplasm. Functionally, an essential GTPase which binds GTP, GDP and possibly (p)ppGpp with moderate affinity, with high nucleotide exchange rates and a fairly low GTP hydrolysis rate. Plays a role in control of the cell cycle, stress response, ribosome biogenesis and in those bacteria that undergo differentiation, in morphogenesis control. This is GTPase Obg from Herminiimonas arsenicoxydans.